The following is a 371-amino-acid chain: Undecaprenyl-diphosphatase 1 (371 aa).

The next 3 helical transmembrane spans lie at 53-73, 100-120, and 126-146; these read PYLA…IVAF, LAWL…LLEH, and LGRP…MLLG. Residues 152-226 are disordered; it reads RSTTRGAPGP…PEAEDVTLPE (75 aa). Helical transmembrane passes span 291–311, 322–342, and 351–371; these read FAFL…LPDL, QTLF…RFLA, and TPFA…FGIF.

It belongs to the UppP family.

Its subcellular location is the cell membrane. It catalyses the reaction di-trans,octa-cis-undecaprenyl diphosphate + H2O = di-trans,octa-cis-undecaprenyl phosphate + phosphate + H(+). Catalyzes the dephosphorylation of undecaprenyl diphosphate (UPP). Confers resistance to bacitracin. The sequence is that of Undecaprenyl-diphosphatase 1 from Frankia casuarinae (strain DSM 45818 / CECT 9043 / HFP020203 / CcI3).